We begin with the raw amino-acid sequence, 158 residues long: SsrA-binding protein (158 aa).

Belongs to the SmpB family.

Its subcellular location is the cytoplasm. Required for rescue of stalled ribosomes mediated by trans-translation. Binds to transfer-messenger RNA (tmRNA), required for stable association of tmRNA with ribosomes. tmRNA and SmpB together mimic tRNA shape, replacing the anticodon stem-loop with SmpB. tmRNA is encoded by the ssrA gene; the 2 termini fold to resemble tRNA(Ala) and it encodes a 'tag peptide', a short internal open reading frame. During trans-translation Ala-aminoacylated tmRNA acts like a tRNA, entering the A-site of stalled ribosomes, displacing the stalled mRNA. The ribosome then switches to translate the ORF on the tmRNA; the nascent peptide is terminated with the 'tag peptide' encoded by the tmRNA and targeted for degradation. The ribosome is freed to recommence translation, which seems to be the essential function of trans-translation. This chain is SsrA-binding protein, found in Acinetobacter baumannii (strain AB307-0294).